Reading from the N-terminus, the 76-residue chain is Small ribosomal subunit protein bS18 (76 aa).

Belongs to the bacterial ribosomal protein bS18 family. In terms of assembly, part of the 30S ribosomal subunit. Forms a tight heterodimer with protein bS6.

In terms of biological role, binds as a heterodimer with protein bS6 to the central domain of the 16S rRNA, where it helps stabilize the platform of the 30S subunit. The polypeptide is Small ribosomal subunit protein bS18 (Xanthomonas campestris pv. campestris (strain 8004)).